The sequence spans 389 residues: 8-amino-7-oxononanoate synthase (389 aa).

Substrate is bound at residue R19. A pyridoxal 5'-phosphate-binding site is contributed by 106–107; that stretch reads GY. Substrate is bound at residue H131. Pyridoxal 5'-phosphate-binding residues include S176, H204, and T233. K236 bears the N6-(pyridoxal phosphate)lysine mark. T350 contributes to the substrate binding site.

It belongs to the class-II pyridoxal-phosphate-dependent aminotransferase family. BioF subfamily. Homodimer. Pyridoxal 5'-phosphate serves as cofactor.

It carries out the reaction 6-carboxyhexanoyl-[ACP] + L-alanine + H(+) = (8S)-8-amino-7-oxononanoate + holo-[ACP] + CO2. Its pathway is cofactor biosynthesis; biotin biosynthesis. Its function is as follows. Catalyzes the decarboxylative condensation of pimeloyl-[acyl-carrier protein] and L-alanine to produce 8-amino-7-oxononanoate (AON), [acyl-carrier protein], and carbon dioxide. In Ectopseudomonas mendocina (strain ymp) (Pseudomonas mendocina), this protein is 8-amino-7-oxononanoate synthase.